The primary structure comprises 427 residues: Inward rectifier potassium channel 2 (427 aa).

Topologically, residues 1 to 81 (MGSVRTNRYS…IFTTCVDIRW (81 aa)) are cytoplasmic. An S-nitrosocysteine modification is found at Cys-76. A helical transmembrane segment spans residues 82–106 (RWMLVIFCLAFVLSWLFFGCVFWLI). Over 107 to 128 (ALLHGDLDASKESKACVSEVNS) the chain is Extracellular. Residues 129 to 140 (FTAAFLFSIETQ) constitute an intramembrane region (helical; Pore-forming). Positions 141–147 (TTIGYGF) form an intramembrane region, pore-forming. The Selectivity filter signature appears at 142-147 (TIGYGF). Over 148 to 156 (RCVTDECPI) the chain is Extracellular. A helical membrane pass occupies residues 157-178 (AVFMVVFQSIVGCIIDAFIIGA). The Cytoplasmic portion of the chain corresponds to 179–427 (VMAKMAKPKK…PRPLRRESEI (249 aa)). The polyphosphoinositide (PIP2)-binding stretch occupies residues 181–208 (AKMAKPKKRNETLVFSHNAVIAMRDGKL). The interval 384-427 (SKEEDDSENGVPESTSTDTPPDIDLHNQASVPLEPRPLRRESEI) is disordered. Residues 425 to 427 (SEI) carry the PDZ-binding motif.

Belongs to the inward rectifier-type potassium channel (TC 1.A.2.1) family. KCNJ2 subfamily. As to quaternary structure, homotetramer. Homomultimeric and heteromultimeric association with KCNJ4/Kir2.3. Can form heteromeric channels with Kir2.6/KCNJ18. Associates, via its PDZ-recognition domain, with a complex containing LIN7A, LIN7B, LIN7C, DLG1, CASK and APBA1. Post-translationally, S-nitrosylation increases the open probability and inward rectifying currents.

The protein localises to the cell membrane. It is found in the sarcolemma. Its subcellular location is the T-tubule. It carries out the reaction K(+)(in) = K(+)(out). With respect to regulation, activated by phosphatidylinositol 4,5 biphosphate (PtdIns(4,5)P2). In terms of biological role, inward rectifier potassium channels are characterized by a greater tendency to allow potassium to flow into the cell rather than out of it. Their voltage dependence is regulated by the concentration of extracellular potassium; as external potassium is raised, the voltage range of the channel opening shifts to more positive voltages. The inward rectification is mainly due to the blockage of outward current by internal magnesium. Blocked by external barium or cesium. Probably participates in establishing action potential waveform and excitability of neuronal and muscle tissues. The chain is Inward rectifier potassium channel 2 (KCNJ2) from Cavia porcellus (Guinea pig).